We begin with the raw amino-acid sequence, 155 residues long: D-aminoacyl-tRNA deacylase (155 aa).

Positions 137–138 (GP) match the Gly-cisPro motif, important for rejection of L-amino acids motif.

This sequence belongs to the DTD family. In terms of assembly, homodimer.

Its subcellular location is the cytoplasm. The enzyme catalyses glycyl-tRNA(Ala) + H2O = tRNA(Ala) + glycine + H(+). The catalysed reaction is a D-aminoacyl-tRNA + H2O = a tRNA + a D-alpha-amino acid + H(+). An aminoacyl-tRNA editing enzyme that deacylates mischarged D-aminoacyl-tRNAs. Also deacylates mischarged glycyl-tRNA(Ala), protecting cells against glycine mischarging by AlaRS. Acts via tRNA-based rather than protein-based catalysis; rejects L-amino acids rather than detecting D-amino acids in the active site. By recycling D-aminoacyl-tRNA to D-amino acids and free tRNA molecules, this enzyme counteracts the toxicity associated with the formation of D-aminoacyl-tRNA entities in vivo and helps enforce protein L-homochirality. The chain is D-aminoacyl-tRNA deacylase from Paracidovorax citrulli (strain AAC00-1) (Acidovorax citrulli).